The primary structure comprises 278 residues: 4-deoxy-L-threo-5-hexosulose-uronate ketol-isomerase (278 aa).

H196, H198, E203, and H245 together coordinate Zn(2+).

Belongs to the KduI family. Zn(2+) is required as a cofactor.

It catalyses the reaction 5-dehydro-4-deoxy-D-glucuronate = 3-deoxy-D-glycero-2,5-hexodiulosonate. The protein operates within glycan metabolism; pectin degradation; 2-dehydro-3-deoxy-D-gluconate from pectin: step 4/5. Catalyzes the isomerization of 5-dehydro-4-deoxy-D-glucuronate to 3-deoxy-D-glycero-2,5-hexodiulosonate. The protein is 4-deoxy-L-threo-5-hexosulose-uronate ketol-isomerase of Yersinia enterocolitica serotype O:8 / biotype 1B (strain NCTC 13174 / 8081).